Consider the following 510-residue polypeptide: MIWHVQNENFILDSTRIFMKAFHLLLFHGSFIFPECILIFGLILLLMIDSTSDQKDRPWFYFISSTSLVMSITALLFRWKEEPIISFSGNFQTNNFNEIFQFLILLCSTLCIPLSVEYIECTEMAITEFLLFVLTATLGGMFLCGANDLITIFVAPECFSLCSYLLSGYTKRDVRSNEATTKYLLMGGASSSILVHGFSWLYGSSGGEIELQEIVNGLINTQMYNSPGISIALISTTVGIGFKLSPAPFHQWTPDVYEGSPTPVVAFLSVTSKVAASASATRIFDIPFYFSSNEWHLLLEILAILSMILGNLIAITQTSMKRMLAYSSIGQIGYVIIGIIVGDSNDGYASMITYMLFYISMNLGTFARIVSFGLRTGTDNIRDYAGLYTKDPFLALSSALCLLSLGGLPPLAGFFGKLHLFWCGWQAGLYFLVSIGLLTSVVSIYYYLKIIKLLMTGRNQEITPHVRNYRRSPLRSNNSIEWSMTVCVIASTIPGISMNPILAIAQDTLF.

Helical transmembrane passes span leucine 24–leucine 44, tryptophan 59–tryptophan 79, isoleucine 99–isoleucine 119, methionine 124–cysteine 144, leucine 149–tyrosine 169, tyrosine 183–glycine 203, tryptophan 295–isoleucine 315, methionine 323–aspartate 343, glycine 347–alanine 367, alanine 395–phenylalanine 415, and leucine 418–leucine 438.

The protein belongs to the complex I subunit 2 family. NDH is composed of at least 16 different subunits, 5 of which are encoded in the nucleus.

It is found in the plastid. The protein localises to the chloroplast thylakoid membrane. The catalysed reaction is a plastoquinone + NADH + (n+1) H(+)(in) = a plastoquinol + NAD(+) + n H(+)(out). It catalyses the reaction a plastoquinone + NADPH + (n+1) H(+)(in) = a plastoquinol + NADP(+) + n H(+)(out). In terms of biological role, NDH shuttles electrons from NAD(P)H:plastoquinone, via FMN and iron-sulfur (Fe-S) centers, to quinones in the photosynthetic chain and possibly in a chloroplast respiratory chain. The immediate electron acceptor for the enzyme in this species is believed to be plastoquinone. Couples the redox reaction to proton translocation, and thus conserves the redox energy in a proton gradient. The chain is NAD(P)H-quinone oxidoreductase subunit 2, chloroplastic from Maianthemum racemosum (False Solomon's-seal).